A 252-amino-acid chain; its full sequence is tRNA pseudouridine synthase A (252 aa).

Residue aspartate 54 is the Nucleophile of the active site. Tyrosine 112 is a binding site for substrate.

This sequence belongs to the tRNA pseudouridine synthase TruA family. As to quaternary structure, homodimer.

It catalyses the reaction uridine(38/39/40) in tRNA = pseudouridine(38/39/40) in tRNA. Formation of pseudouridine at positions 38, 39 and 40 in the anticodon stem and loop of transfer RNAs. In Oenococcus oeni (strain ATCC BAA-331 / PSU-1), this protein is tRNA pseudouridine synthase A.